Reading from the N-terminus, the 174-residue chain is Crossover junction endodeoxyribonuclease RuvC (174 aa).

Active-site residues include D8, E68, and D140. Mg(2+) contacts are provided by D8, E68, and D140.

The protein belongs to the RuvC family. Homodimer which binds Holliday junction (HJ) DNA. The HJ becomes 2-fold symmetrical on binding to RuvC with unstacked arms; it has a different conformation from HJ DNA in complex with RuvA. In the full resolvosome a probable DNA-RuvA(4)-RuvB(12)-RuvC(2) complex forms which resolves the HJ. Mg(2+) is required as a cofactor.

The protein localises to the cytoplasm. It carries out the reaction Endonucleolytic cleavage at a junction such as a reciprocal single-stranded crossover between two homologous DNA duplexes (Holliday junction).. Functionally, the RuvA-RuvB-RuvC complex processes Holliday junction (HJ) DNA during genetic recombination and DNA repair. Endonuclease that resolves HJ intermediates. Cleaves cruciform DNA by making single-stranded nicks across the HJ at symmetrical positions within the homologous arms, yielding a 5'-phosphate and a 3'-hydroxyl group; requires a central core of homology in the junction. The consensus cleavage sequence is 5'-(A/T)TT(C/G)-3'. Cleavage occurs on the 3'-side of the TT dinucleotide at the point of strand exchange. HJ branch migration catalyzed by RuvA-RuvB allows RuvC to scan DNA until it finds its consensus sequence, where it cleaves and resolves the cruciform DNA. This is Crossover junction endodeoxyribonuclease RuvC from Legionella pneumophila (strain Paris).